The chain runs to 337 residues: UDP-3-O-acylglucosamine N-acyltransferase (337 aa).

The active-site Proton acceptor is the His-238.

This sequence belongs to the transferase hexapeptide repeat family. LpxD subfamily. As to quaternary structure, homotrimer.

The enzyme catalyses a UDP-3-O-[(3R)-3-hydroxyacyl]-alpha-D-glucosamine + a (3R)-hydroxyacyl-[ACP] = a UDP-2-N,3-O-bis[(3R)-3-hydroxyacyl]-alpha-D-glucosamine + holo-[ACP] + H(+). It participates in bacterial outer membrane biogenesis; LPS lipid A biosynthesis. In terms of biological role, catalyzes the N-acylation of UDP-3-O-acylglucosamine using 3-hydroxyacyl-ACP as the acyl donor. Is involved in the biosynthesis of lipid A, a phosphorylated glycolipid that anchors the lipopolysaccharide to the outer membrane of the cell. The sequence is that of UDP-3-O-acylglucosamine N-acyltransferase from Xanthomonas campestris pv. campestris (strain 8004).